The following is a 222-amino-acid chain: C-reactive protein (222 aa).

The N-terminal stretch at 1-19 (MEKLSLCLLVIISLSNAFA) is a signal peptide. Gln-20 bears the Pyrrolidone carboxylic acid mark. The Pentraxin (PTX) domain maps to 24–222 (IGKAFVFPKE…EVYVKPQLWP (199 aa)). The cysteines at positions 55 and 113 are disulfide-linked. Ca(2+) contacts are provided by Asn-78, Glu-154, Gln-155, Asp-156, and Gln-166.

Belongs to the pentraxin family. Homopentamer. Pentraxin (or pentaxin) have a discoid arrangement of 5 non-covalently bound subunits. Interacts with FCN1; may regulate monocyte activation by FCN1. Ca(2+) is required as a cofactor. Found in plasma.

It localises to the secreted. In terms of biological role, displays several functions associated with host defense: it promotes agglutination, bacterial capsular swelling, phagocytosis and complement fixation through its calcium-dependent binding to phosphorylcholine. Can interact with DNA and histones and may scavenge nuclear material released from damaged circulating cells. This chain is C-reactive protein (CRP), found in Sus scrofa (Pig).